The sequence spans 436 residues: POU domain, class 2, transcription factor 3 (436 aa).

Disordered stretches follow at residues 1-40 (MVNL…NGLD), 140-186 (QTGP…DEPS), and 256-278 (AESS…SEVF). The region spanning 183-257 (DEPSDLEELE…LLEKWLNDAE (75 aa)) is the POU-specific domain. A compositionally biased stretch (low complexity) spans 258–275 (SSPSDPSVSTPSSYPSLS). The segment at residues 281–340 (KRKKRTSIETNIRLTLEKRFQDNPKPSSEEISMIAEQLSMEKEVVRVWFCNRRQKEKRIN) is a DNA-binding region (homeobox). The disordered stretch occupies residues 363-421 (LGPLSVPPVHSTMPGTVTSSCSPGNNSRPSSPGSGLHASSPTASQNNSKAAVNSASSFN). Composition is skewed to low complexity over residues 381 to 397 (SSCS…PGSG) and 405 to 421 (ASQN…SSFN).

The protein belongs to the POU transcription factor family. Class-2 subfamily. Interacts (via the POU domain) with POU2AF1 and POU2AF2 in a DNA-dependent manner; this interaction recruits POU2AF2 to chromatin and increases POU2F3 transactivation activity. In terms of tissue distribution, specifically expressed in epidermis and cultured keratinocytes.

Its subcellular location is the nucleus. In terms of biological role, transcription factor that binds to the octamer motif (5'-ATTTGCAT-3') and regulates cell type-specific differentiation pathways. Involved in the regulation of keratinocytes differentiation. The POU2F3-POU2AF2/POU2AF3 complex drives the expression of tuft-cell-specific genes, a rare chemosensory cells that coordinate immune and neural functions within mucosal epithelial tissues. This chain is POU domain, class 2, transcription factor 3, found in Homo sapiens (Human).